Reading from the N-terminus, the 97-residue chain is Small ribosomal subunit protein bS6 (97 aa).

Belongs to the bacterial ribosomal protein bS6 family.

Binds together with bS18 to 16S ribosomal RNA. This is Small ribosomal subunit protein bS6 from Listeria monocytogenes serotype 4b (strain CLIP80459).